The chain runs to 750 residues: Photosystem I P700 chlorophyll a apoprotein A1 (750 aa).

A run of 8 helical transmembrane segments spans residues 70 to 93, 156 to 179, 195 to 219, 291 to 309, 346 to 369, 385 to 411, 433 to 455, and 531 to 549; these read VFSAHFGQLAIIFIWLSGMYFHGA, LYSTAIGGLIFAALMLFAGWFHYH, LNHHLAGLLGLGSLAWAGHQVHVSL, TAHHHLAIAVVFLVAGHMY, WHAQLALNLAMLGSLTIIVAHHMY, LSLFTHHMWIGGFTIVGAAAHAAIFMV, AIISHLNWACIFLGFHSFGLYIH, and FLVHHIHAFTIHVTVLILL. [4Fe-4S] cluster-binding residues include Cys573 and Cys582. Helical transmembrane passes span 589–610 and 664–686; these read HVFLGLFWMYNAISVVIFHFSW and LSAYGLLFLGAHFVWAFSLMFLF. Position 675 (His675) interacts with chlorophyll a'. Chlorophyll a-binding residues include Met683 and Tyr691. Trp692 is a phylloquinone binding site. The chain crosses the membrane as a helical span at residues 724–744; the sequence is AVGVAHYLLGGIATTWAFFLA.

This sequence belongs to the PsaA/PsaB family. In terms of assembly, the PsaA/B heterodimer binds the P700 chlorophyll special pair and subsequent electron acceptors. PSI consists of a core antenna complex that captures photons, and an electron transfer chain that converts photonic excitation into a charge separation. The eukaryotic PSI reaction center is composed of at least 11 subunits. The cofactor is P700 is a chlorophyll a/chlorophyll a' dimer, A0 is one or more chlorophyll a, A1 is one or both phylloquinones and FX is a shared 4Fe-4S iron-sulfur center..

It is found in the plastid. Its subcellular location is the chloroplast thylakoid membrane. It carries out the reaction reduced [plastocyanin] + hnu + oxidized [2Fe-2S]-[ferredoxin] = oxidized [plastocyanin] + reduced [2Fe-2S]-[ferredoxin]. Its function is as follows. PsaA and PsaB bind P700, the primary electron donor of photosystem I (PSI), as well as the electron acceptors A0, A1 and FX. PSI is a plastocyanin-ferredoxin oxidoreductase, converting photonic excitation into a charge separation, which transfers an electron from the donor P700 chlorophyll pair to the spectroscopically characterized acceptors A0, A1, FX, FA and FB in turn. Oxidized P700 is reduced on the lumenal side of the thylakoid membrane by plastocyanin. This is Photosystem I P700 chlorophyll a apoprotein A1 from Anthoceros angustus (Hornwort).